The primary structure comprises 185 residues: Ribosome-recycling factor (185 aa).

The protein belongs to the RRF family.

Its subcellular location is the cytoplasm. Its function is as follows. Responsible for the release of ribosomes from messenger RNA at the termination of protein biosynthesis. May increase the efficiency of translation by recycling ribosomes from one round of translation to another. This is Ribosome-recycling factor from Listeria welshimeri serovar 6b (strain ATCC 35897 / DSM 20650 / CCUG 15529 / CIP 8149 / NCTC 11857 / SLCC 5334 / V8).